Consider the following 64-residue polypeptide: Long neurotoxin MS2 (64 aa).

5 disulfide bridges follow: cysteine 3-cysteine 24, cysteine 6-cysteine 11, cysteine 17-cysteine 41, cysteine 45-cysteine 57, and cysteine 58-cysteine 63.

This sequence belongs to the three-finger toxin family. Ancestral subfamily. As to expression, expressed by the venom gland.

It is found in the secreted. Its function is as follows. Produces peripheral paralysis by blocking neuromuscular transmission at the postsynaptic site. Very weak inhibitor of the endogenous nicotinic acetylcholine receptors (nAChR) in the human rhabdomyosarcoma TE 671 cell line. Not toxic to mice by intraperitoneal injection or to zebrafish by injection at the back of the dorsolateral region. In Micrurus surinamensis (Surinam coral snake), this protein is Long neurotoxin MS2.